The following is a 400-amino-acid chain: Tryptophan synthase beta chain (400 aa).

Lys91 carries the post-translational modification N6-(pyridoxal phosphate)lysine.

This sequence belongs to the TrpB family. In terms of assembly, tetramer of two alpha and two beta chains. It depends on pyridoxal 5'-phosphate as a cofactor.

The enzyme catalyses (1S,2R)-1-C-(indol-3-yl)glycerol 3-phosphate + L-serine = D-glyceraldehyde 3-phosphate + L-tryptophan + H2O. It functions in the pathway amino-acid biosynthesis; L-tryptophan biosynthesis; L-tryptophan from chorismate: step 5/5. Its function is as follows. The beta subunit is responsible for the synthesis of L-tryptophan from indole and L-serine. The protein is Tryptophan synthase beta chain of Listeria monocytogenes serovar 1/2a (strain ATCC BAA-679 / EGD-e).